The chain runs to 128 residues: Large ribosomal subunit protein bL20 (128 aa).

It belongs to the bacterial ribosomal protein bL20 family.

Functionally, binds directly to 23S ribosomal RNA and is necessary for the in vitro assembly process of the 50S ribosomal subunit. It is not involved in the protein synthesizing functions of that subunit. The sequence is that of Large ribosomal subunit protein bL20 from Corynebacterium efficiens (strain DSM 44549 / YS-314 / AJ 12310 / JCM 11189 / NBRC 100395).